We begin with the raw amino-acid sequence, 599 residues long: Dachshund homolog 2 (599 aa).

The segment at arginine 69 to leucine 155 is DACHbox-N. 3 disordered regions span residues arginine 166 to serine 186, leucine 237 to histidine 280, and arginine 370 to histidine 409. Over residues leucine 237–serine 262 the composition is skewed to polar residues. The segment covering serine 389–glutamine 405 has biased composition (low complexity). The segment at serine 453–leucine 533 is DACHbox-C. Residues leucine 459–aspartate 554 are a coiled coil.

It belongs to the DACH/dachshund family. In terms of assembly, interacts with SIX6 and EYA2.

Its subcellular location is the nucleus. Transcription factor that is involved in regulation of organogenesis. Seems to be a regulator for SIX1 and SIX6. Seems to act as a corepressor of SIX6 in regulating proliferation by directly repressing cyclin-dependent kinase inhibitors, including the p27Kip1 promoter. Is recruited with SIX6 to the p27Kip1 promoter in embryonal retina. SIX6 corepression also seems to involve NCOR1, TBL1, HDAC1 and HDAC3. May be involved together with PAX3, SIX1, and EYA2 in regulation of myogenesis. In the developing somite, expression of DACH2 and PAX3 is regulated by the overlying ectoderm, and DACH2 and PAX3 positively regulate each other's expression. Probably binds to DNA via its DACHbox-N domain. The chain is Dachshund homolog 2 (DACH2) from Homo sapiens (Human).